The sequence spans 323 residues: ATP synthase gamma chain (323 aa).

This sequence belongs to the ATPase gamma chain family. F-type ATPases have 2 components, CF(1) - the catalytic core - and CF(0) - the membrane proton channel. CF(1) has five subunits: alpha(3), beta(3), gamma(1), delta(1), epsilon(1). CF(0) has three main subunits: a, b and c.

It localises to the cell membrane. In terms of biological role, produces ATP from ADP in the presence of a proton gradient across the membrane. The gamma chain is believed to be important in regulating ATPase activity and the flow of protons through the CF(0) complex. The polypeptide is ATP synthase gamma chain (Nocardia farcinica (strain IFM 10152)).